We begin with the raw amino-acid sequence, 183 residues long: Shikimate kinase (183 aa).

18-23 serves as a coordination point for ATP; that stretch reads GVGKTT. Threonine 22 contacts Mg(2+). The substrate site is built by aspartate 40, arginine 64, and glycine 86. Arginine 125 lines the ATP pocket. Substrate is bound at residue arginine 143.

The protein belongs to the shikimate kinase family. As to quaternary structure, monomer. It depends on Mg(2+) as a cofactor.

Its subcellular location is the cytoplasm. The catalysed reaction is shikimate + ATP = 3-phosphoshikimate + ADP + H(+). Its pathway is metabolic intermediate biosynthesis; chorismate biosynthesis; chorismate from D-erythrose 4-phosphate and phosphoenolpyruvate: step 5/7. Its function is as follows. Catalyzes the specific phosphorylation of the 3-hydroxyl group of shikimic acid using ATP as a cosubstrate. This Oceanobacillus iheyensis (strain DSM 14371 / CIP 107618 / JCM 11309 / KCTC 3954 / HTE831) protein is Shikimate kinase.